The primary structure comprises 301 residues: Acetylglutamate kinase (301 aa).

Residues 68–69 (GG), R90, and N195 contribute to the substrate site.

Belongs to the acetylglutamate kinase family. ArgB subfamily.

It is found in the cytoplasm. It carries out the reaction N-acetyl-L-glutamate + ATP = N-acetyl-L-glutamyl 5-phosphate + ADP. Its pathway is amino-acid biosynthesis; L-arginine biosynthesis; N(2)-acetyl-L-ornithine from L-glutamate: step 2/4. Functionally, catalyzes the ATP-dependent phosphorylation of N-acetyl-L-glutamate. The protein is Acetylglutamate kinase of Pseudomonas fluorescens (strain SBW25).